Consider the following 79-residue polypeptide: MVKIRLARYGTKKRPFYKLVVADSRFSRNGRFIERLGYFNPIAKGKSEILKLNLERIEHWTNQGAQMSERTKKLIKQKR.

It belongs to the bacterial ribosomal protein bS16 family.

The sequence is that of Small ribosomal subunit protein bS16 from Buchnera aphidicola subsp. Acyrthosiphon pisum (strain 5A).